Consider the following 25-residue polypeptide: CDAPTHYCTNYWECCSGYCEHSHCW.

3 disulfides stabilise this stretch: cysteine 1-cysteine 15, cysteine 8-cysteine 19, and cysteine 14-cysteine 24. Proline 4 carries the 4-hydroxyproline modification. 4-carboxyglutamate is present on residues glutamate 13 and glutamate 20.

Belongs to the conotoxin O2 superfamily. Expressed by the venom duct.

The protein resides in the secreted. Its function is as follows. Micromolar concentrations of PiVIIA increase the magnitude of the macroscopic calcium current in DRG neurons from rat. An increase, even modest of the calcium current, may have a significant impact in the excitability and electrical activity of neurons, and may set up PiVIIA as a member of the pharmacological family of the gamma-conotoxins. The polypeptide is Gamma-conotoxin PiVIIA (Conus princeps (Prince cone)).